Reading from the N-terminus, the 437-residue chain is Probable glycine dehydrogenase (decarboxylating) subunit 1 (437 aa).

It belongs to the GcvP family. N-terminal subunit subfamily. In terms of assembly, the glycine cleavage system is composed of four proteins: P, T, L and H. In this organism, the P 'protein' is a heterodimer of two subunits.

The catalysed reaction is N(6)-[(R)-lipoyl]-L-lysyl-[glycine-cleavage complex H protein] + glycine + H(+) = N(6)-[(R)-S(8)-aminomethyldihydrolipoyl]-L-lysyl-[glycine-cleavage complex H protein] + CO2. In terms of biological role, the glycine cleavage system catalyzes the degradation of glycine. The P protein binds the alpha-amino group of glycine through its pyridoxal phosphate cofactor; CO(2) is released and the remaining methylamine moiety is then transferred to the lipoamide cofactor of the H protein. The chain is Probable glycine dehydrogenase (decarboxylating) subunit 1 from Thermotoga petrophila (strain ATCC BAA-488 / DSM 13995 / JCM 10881 / RKU-1).